Reading from the N-terminus, the 263-residue chain is Norsolorinic acid ketoreductase stcE (263 aa).

The NADP(+) site is built by Leu-29, Asp-76, Asn-105, Tyr-177, Lys-181, Ile-208, and Ser-210. Tyr-177 serves as the catalytic Proton donor. Lys-181 (lowers pKa of active site Tyr) is an active-site residue.

It belongs to the short-chain dehydrogenases/reductases (SDR) family.

It carries out the reaction (1'S)-averantin + NADP(+) = norsolorinic acid + NADPH + H(+). It participates in mycotoxin biosynthesis; sterigmatocystin biosynthesis. Its function is as follows. Short chain dehydrogenase; part of the gene cluster that mediates the biosynthesis of sterigmatocystin (ST), a polyketide-derived furanocoumarin which is part of the most toxic and carcinogenic compounds among the known mycotoxins. The first step in the biosynthesis of sterigmatocystin is the production of hexanoate by the fatty acid synthase (FAS) units stcJ and stcK. The polyketide backbone is assembled by the non-reducing polyketide synthase stcA by condensation of the starter hexanoyl-CoA and 7 malonyl-CoA extender units followed by cyclization and release of norsolorinic acid. Norsolorinic acid is the first stable intermediate in the biosynthesis of sterigmatocystin and is converted into averantin (AVN) by the ketoreductase stcE which reduces the hexanoate ketone to an alcohol. Averantin is then oxidized into 5'-hydroxyaverantin (HAVN) by the cytochrome P450 monooxygenase stcF. 5'-hydroxyaverantin is further converted to 5'-oxyaverantin (OAVN) by the 5'-hydroxyaverantin dehydrogenase stcG. The next step is the conversion of OAVN into averufin (AVF) which is catalyzed by a yet to be identified enzyme. The cytochrome P450 monooxygenase stcB and the flavin-binding monooxygenase stcW are both required for the conversion of averufin to 1-hydroxyversicolorone. The esterase stcI probably catalyzes the formation of versiconal hemiacetal acetate from 1-hydroxyversicolorone. The oxydoreductase stcN then probably catalyzes the biosynthetic step from versiconal to versicolorin B (VERB). The next step is performed by the versicolorin B desaturase stcL to produce versicolorin A (VERA). The ketoreductase stcU and the cytochrome P450 monooxygenase stcS are involved in the conversion of versicolorin A to demethylsterigmatocystin. The Baeyer-Villiger oxidas stcQ and the reductase stcR might be involved in the biosynthetic step from versicolorin A to demethylsterigmatocystin. The final step in the biosynthesis of sterigmatocystin is the methylation of demethylsterigmatocystin catalyzed by the methyltransferase stcP. The sequence is that of Norsolorinic acid ketoreductase stcE from Emericella nidulans (strain FGSC A4 / ATCC 38163 / CBS 112.46 / NRRL 194 / M139) (Aspergillus nidulans).